Consider the following 167-residue polypeptide: Endoribonuclease YbeY (167 aa).

3 residues coordinate Zn(2+): His131, His135, and His141.

It belongs to the endoribonuclease YbeY family. Zn(2+) serves as cofactor.

It localises to the cytoplasm. Its function is as follows. Single strand-specific metallo-endoribonuclease involved in late-stage 70S ribosome quality control and in maturation of the 3' terminus of the 16S rRNA. This Rickettsia africae (strain ESF-5) protein is Endoribonuclease YbeY.